Reading from the N-terminus, the 111-residue chain is Ribonuclease P protein component (111 aa).

Belongs to the RnpA family. As to quaternary structure, consists of a catalytic RNA component (M1 or rnpB) and a protein subunit.

It catalyses the reaction Endonucleolytic cleavage of RNA, removing 5'-extranucleotides from tRNA precursor.. RNaseP catalyzes the removal of the 5'-leader sequence from pre-tRNA to produce the mature 5'-terminus. It can also cleave other RNA substrates such as 4.5S RNA. The protein component plays an auxiliary but essential role in vivo by binding to the 5'-leader sequence and broadening the substrate specificity of the ribozyme. The polypeptide is Ribonuclease P protein component (Clostridium botulinum (strain Okra / Type B1)).